Consider the following 204-residue polypeptide: Endothelin-3 (204 aa).

An N-terminal signal peptide occupies residues 1-17; that stretch reads MELRLWFLFGLTVTSAA. The interval 18–71 is disordered; it reads GPVPRPQPGDAGRSGVPRAPSATKETMAMVATRGPSPRSSGQEQEPGPFGELAA. Positions 18–80 are excised as a propeptide; sequence GPVPRPQPGD…AKGGPVRYRA (63 aa). 2 disulfides stabilise this stretch: C83-C97 and C85-C93. Residues 104–204 constitute a propeptide that is removed on maturation; it reads INTPERTVPY…KSRTDKARRL (101 aa). The segment at 115 to 140 is disordered; sequence LSNHRGSVRGRRSAGPSPQSSQPSRG. The span at 127–140 shows a compositional bias: low complexity; sequence SAGPSPQSSQPSRG. Residues 144 to 158 form an endothelin-like region; it reads CACAESQDRACVYFC. Residues 166–204 are disordered; the sequence is GASRTPETPDKEAGKPAGRATGGLHPRRLKSRTDKARRL.

This sequence belongs to the endothelin/sarafotoxin family.

The protein resides in the secreted. Functionally, endothelins are endothelium-derived vasoconstrictor peptides. The chain is Endothelin-3 (EDN3) from Sus scrofa (Pig).